The sequence spans 700 residues: Pentatricopeptide repeat-containing protein At3g26540 (700 aa).

PPR repeat units follow at residues 95 to 125 (PIFL…MPER), 126 to 160 (DGGS…GVRA), 161 to 195 (TETS…GYSG), 196 to 226 (NVDL…IVNP), 227 to 261 (SDVS…NVRP), 262 to 296 (LNHT…SVVA), 297 to 327 (DTVV…TRSK), 328 to 362 (DLKS…NIVS), 363 to 389 (WNAM…MRQE), 394 to 428 (DNVT…GYDT), 429 to 459 (NVIV…MSEL), 461 to 495 (DEVS…AKPS), 497 to 529 (YTLA…GYKI), 530 to 560 (DVVI…AATR), 561 to 595 (DLIL…GVKP), 596 to 626 (DHVT…MSTK), and 632 to 662 (QVEH…MPFD).

It belongs to the PPR family. PCMP-A subfamily.

The sequence is that of Pentatricopeptide repeat-containing protein At3g26540 (PCMP-A5) from Arabidopsis thaliana (Mouse-ear cress).